Consider the following 330-residue polypeptide: Putative F-box protein At1g57690 (330 aa).

The F-box domain occupies 25 to 72 (VDIISSLPDVILQHILFSFQTKYAIRTSVLSKRWRHEADAINKALSQY).

This chain is Putative F-box protein At1g57690, found in Arabidopsis thaliana (Mouse-ear cress).